The following is a 474-amino-acid chain: tRNA-2-methylthio-N(6)-dimethylallyladenosine synthase (474 aa).

Residues 3 to 120 (KKLHIKTWGC…LPEMINSVRG (118 aa)) enclose the MTTase N-terminal domain. 6 residues coordinate [4Fe-4S] cluster: C12, C49, C83, C157, C161, and C164. The region spanning 143–375 (RAEGPTAFVS…QERINQQAMA (233 aa)) is the Radical SAM core domain. One can recognise a TRAM domain in the interval 378 to 441 (RRMLGTVQRI…TNSLRGKVVR (64 aa)).

This sequence belongs to the methylthiotransferase family. MiaB subfamily. Monomer. [4Fe-4S] cluster serves as cofactor.

The protein resides in the cytoplasm. The enzyme catalyses N(6)-dimethylallyladenosine(37) in tRNA + (sulfur carrier)-SH + AH2 + 2 S-adenosyl-L-methionine = 2-methylsulfanyl-N(6)-dimethylallyladenosine(37) in tRNA + (sulfur carrier)-H + 5'-deoxyadenosine + L-methionine + A + S-adenosyl-L-homocysteine + 2 H(+). Functionally, catalyzes the methylthiolation of N6-(dimethylallyl)adenosine (i(6)A), leading to the formation of 2-methylthio-N6-(dimethylallyl)adenosine (ms(2)i(6)A) at position 37 in tRNAs that read codons beginning with uridine. The chain is tRNA-2-methylthio-N(6)-dimethylallyladenosine synthase from Citrobacter koseri (strain ATCC BAA-895 / CDC 4225-83 / SGSC4696).